Reading from the N-terminus, the 509-residue chain is MSSSAVSPKQWVAGLNSELDIPAVNRRTSIICTIGPKSNNVETLCKLRDAGMNIVRMNFSHGSYEYHQSVIDNARKASATNPLFPLAIALDTKGPEIRTGLTVGGTDYPISSGHEMIFTTDDAYAEKCNDKVMYIDYKNITKVIQPGRIIYVDDGILSFTVIEKVDDKNLKVRVNNNGKISSKKGVNLPKTDVDLPALSEKDKADLRFGVKNGVDMIFASFIRRAEDVIHIREVLGEEGKNIKIICKIENQQGVNNFDSILDVTDGIMVARGDLGIEIPASQVFVAQKMMIAKCNIAGKPVACATQMLESMTYNPRPTRAEVSDVGNAVLDGADLVMLSGETTKGSYPVEAVTYMAETARVAEASIPYGSLYQEMFGLVRRPLECATETTAVAAIGASIESDAKAIVVLSTSGNTARLCSKYRPSIPIVMVTRCPQRARQSHLNRGVYPVIYEKEPLSDWQKDVDARVAYGCQQAYKMNILKKGDKIIVLQGAVGGKGHTSIFRLTVAE.

At Ser29 the chain carries Phosphoserine. Arg56 contributes to the substrate binding site. 2 residues coordinate K(+): Asn58 and Ser60. 58-61 (NFSH) serves as a coordination point for ATP. Ser63 carries the phosphoserine modification. K(+) is bound by residues Asp91 and Thr92. Residues Arg98 and Lys184 each coordinate ATP. Residue Glu249 coordinates Mg(2+). Substrate-binding residues include Gly272 and Asp273. A Mg(2+)-binding site is contributed by Asp273. The residue at position 281 (Ser281) is a Phosphoserine. Thr305 serves as a coordination point for substrate. Residue Ser412 is modified to Phosphoserine.

Belongs to the pyruvate kinase family. In terms of assembly, homotetramer. The cofactor is Mg(2+). It depends on K(+) as a cofactor.

The catalysed reaction is pyruvate + ATP = phosphoenolpyruvate + ADP + H(+). The protein operates within carbohydrate degradation; glycolysis; pyruvate from D-glyceraldehyde 3-phosphate: step 5/5. This Schizosaccharomyces pombe (strain 972 / ATCC 24843) (Fission yeast) protein is Pyruvate kinase (pyk1).